A 201-amino-acid polypeptide reads, in one-letter code: Peptidyl-prolyl cis-trans isomerase FKBP11 (201 aa).

Positions 1–27 (MTLRPSLLPLHLLLLLLLSAAVCRAEA) are cleaved as a signal peptide. In terms of domain architecture, PPIase FKBP-type spans 57-144 (GDTLHIHYTG…QYDVELIALI (88 aa)). Residues 156 to 176 (ILPLVGMAMVPALLGLIGYHL) form a helical membrane-spanning segment.

The protein belongs to the FKBP-type PPIase family. Interacts with IFITM5.

It localises to the membrane. It catalyses the reaction [protein]-peptidylproline (omega=180) = [protein]-peptidylproline (omega=0). PPIases accelerate the folding of proteins during protein synthesis. The protein is Peptidyl-prolyl cis-trans isomerase FKBP11 (FKBP11) of Homo sapiens (Human).